Here is a 417-residue protein sequence, read N- to C-terminus: MNKLYIEGDKKLNGNVIISGSKNAALPILFMTILTEKKIKISNVPKLRDINIAIQLLKSLGAQIKYKKKNLYIDTSSIKIHSPPYDLTKQIRASIWMLAPLLIRFGKAKIFLPGGCKIGARPIDLHIKGLIALGAKIILEKNYISASIKKPLTGKRIYIEKISVGATITVMSAATLAQGTTIIENAAQEPEIIDTAKFLNTLGANIIGAGSNRIFIKGVLTLIGGKHKIIPDRIETGTFLIAAAISKGYIICHDTEPKYLKNVLMKLSESGAEIKTGKDWIQLDMRGKKPKSINISTSPYPGFPTDMQPQFALLNSISQSKGTITENIFENRFIYTSELIKMGAKIKIKNNSIVCKGVPNLYSQNVFSNDLRGSATLVLAGCIARGTTTVDNIHHFERGYEAFSEKLNKLGANIKYI.

Residue 22 to 23 coordinates phosphoenolpyruvate; sequence KN. Arg-92 is a binding site for UDP-N-acetyl-alpha-D-glucosamine. Cys-116 (proton donor) is an active-site residue. Cys-116 carries the post-translational modification 2-(S-cysteinyl)pyruvic acid O-phosphothioketal. UDP-N-acetyl-alpha-D-glucosamine is bound by residues 121–125, Asp-306, and Ile-328; that span reads RPIDL.

This sequence belongs to the EPSP synthase family. MurA subfamily.

It localises to the cytoplasm. It carries out the reaction phosphoenolpyruvate + UDP-N-acetyl-alpha-D-glucosamine = UDP-N-acetyl-3-O-(1-carboxyvinyl)-alpha-D-glucosamine + phosphate. The protein operates within cell wall biogenesis; peptidoglycan biosynthesis. Cell wall formation. Adds enolpyruvyl to UDP-N-acetylglucosamine. The protein is UDP-N-acetylglucosamine 1-carboxyvinyltransferase of Buchnera aphidicola subsp. Schizaphis graminum (strain Sg).